The primary structure comprises 509 residues: Lysine--tRNA ligase (509 aa).

The span at 1-18 shows a compositional bias: polar residues; the sequence is MSEQNPTQAAKQAPQQEL. Residues 1–20 are disordered; the sequence is MSEQNPTQAAKQAPQQELND. Residues glutamate 418 and glutamate 425 each contribute to the Mg(2+) site.

This sequence belongs to the class-II aminoacyl-tRNA synthetase family. As to quaternary structure, homodimer. Mg(2+) is required as a cofactor.

It localises to the cytoplasm. It carries out the reaction tRNA(Lys) + L-lysine + ATP = L-lysyl-tRNA(Lys) + AMP + diphosphate. In Psychromonas ingrahamii (strain DSM 17664 / CCUG 51855 / 37), this protein is Lysine--tRNA ligase.